Here is a 201-residue protein sequence, read N- to C-terminus: 3-isopropylmalate dehydratase small subunit (201 aa).

It belongs to the LeuD family. LeuD type 1 subfamily. In terms of assembly, heterodimer of LeuC and LeuD.

The catalysed reaction is (2R,3S)-3-isopropylmalate = (2S)-2-isopropylmalate. Its pathway is amino-acid biosynthesis; L-leucine biosynthesis; L-leucine from 3-methyl-2-oxobutanoate: step 2/4. Catalyzes the isomerization between 2-isopropylmalate and 3-isopropylmalate, via the formation of 2-isopropylmaleate. In Shewanella sp. (strain MR-7), this protein is 3-isopropylmalate dehydratase small subunit.